We begin with the raw amino-acid sequence, 281 residues long: UPF0294 protein VC_2238 (281 aa).

It belongs to the UPF0294 family.

It localises to the cytoplasm. This chain is UPF0294 protein VC_2238, found in Vibrio cholerae serotype O1 (strain ATCC 39315 / El Tor Inaba N16961).